Here is a 207-residue protein sequence, read N- to C-terminus: MLSVILKESVRNLGKAGVVTKVKPGYARYLLAQKKAVRATKENLKILEEQHISIQQENLEKLEAAKALQVSLKDEFLIIIRQAADDGKLFGSVTPKCISKLLSDKGYNIHYHNIFFHSVIKYIGEYVVNLELHHDLVVPMMLYVVKNDLGAMQAQKLHLDKQKKEEKAKDEVSATEKDEELMLSSVTNDNDGDGAKEIVVEGTEESQ.

Residues 162-176 (QKKEEKAKDEVSATE) show a composition bias toward basic and acidic residues. Residues 162–207 (QKKEEKAKDEVSATEKDEELMLSSVTNDNDGDGAKEIVVEGTEESQ) form a disordered region.

This sequence belongs to the bacterial ribosomal protein bL9 family.

In terms of biological role, binds to the 23S rRNA. The sequence is that of Large ribosomal subunit protein bL9 from Ehrlichia ruminantium (strain Gardel).